Consider the following 513-residue polypeptide: ATP synthase subunit alpha (513 aa).

Residue 169-176 participates in ATP binding; it reads GDRQTGKT.

It belongs to the ATPase alpha/beta chains family. In terms of assembly, F-type ATPases have 2 components, CF(1) - the catalytic core - and CF(0) - the membrane proton channel. CF(1) has five subunits: alpha(3), beta(3), gamma(1), delta(1), epsilon(1). CF(0) has three main subunits: a(1), b(2) and c(9-12). The alpha and beta chains form an alternating ring which encloses part of the gamma chain. CF(1) is attached to CF(0) by a central stalk formed by the gamma and epsilon chains, while a peripheral stalk is formed by the delta and b chains.

Its subcellular location is the cell inner membrane. The enzyme catalyses ATP + H2O + 4 H(+)(in) = ADP + phosphate + 5 H(+)(out). Its function is as follows. Produces ATP from ADP in the presence of a proton gradient across the membrane. The alpha chain is a regulatory subunit. This chain is ATP synthase subunit alpha, found in Citrobacter koseri (strain ATCC BAA-895 / CDC 4225-83 / SGSC4696).